The primary structure comprises 434 residues: 26S proteasome regulatory subunit RPN6 (434 aa).

Residue S2 is modified to N-acetylserine. The PCI domain maps to 235–404 (AFSYFFESFE…GWLYVYETPN (170 aa)).

The protein belongs to the proteasome subunit S9 family. Component of the lid subcomplex of the 19S proteasome regulatory particle complex (also named PA700 complex). The 26S proteasome consists of a 20S proteasome core and two 19S regulatory subunits. In terms of processing, N-acetylated by NAT1.

Functionally, component of the lid subcomplex of the 26S proteasome, a multiprotein complex involved in the ATP-dependent degradation of ubiquitinated proteins. In the complex, RPN6 is required for proteasome assembly. This is 26S proteasome regulatory subunit RPN6 (RPN6) from Saccharomyces cerevisiae (strain ATCC 204508 / S288c) (Baker's yeast).